The following is a 286-amino-acid chain: Ribosomal RNA small subunit methyltransferase H (286 aa).

Residues 25-27, Asp-45, Leu-79, Asp-93, and Gln-100 each bind S-adenosyl-L-methionine; that span reads GGH.

This sequence belongs to the methyltransferase superfamily. RsmH family.

It is found in the cytoplasm. The catalysed reaction is cytidine(1402) in 16S rRNA + S-adenosyl-L-methionine = N(4)-methylcytidine(1402) in 16S rRNA + S-adenosyl-L-homocysteine + H(+). In terms of biological role, specifically methylates the N4 position of cytidine in position 1402 (C1402) of 16S rRNA. The polypeptide is Ribosomal RNA small subunit methyltransferase H (Petrotoga mobilis (strain DSM 10674 / SJ95)).